Consider the following 114-residue polypeptide: Large ribosomal subunit protein bL20 (114 aa).

The protein belongs to the bacterial ribosomal protein bL20 family.

Binds directly to 23S ribosomal RNA and is necessary for the in vitro assembly process of the 50S ribosomal subunit. It is not involved in the protein synthesizing functions of that subunit. This is Large ribosomal subunit protein bL20 from Flavobacterium psychrophilum (strain ATCC 49511 / DSM 21280 / CIP 103535 / JIP02/86).